Here is a 526-residue protein sequence, read N- to C-terminus: MDDAGKITSTSHLIVSPDEGTFLDLFKHIVLSDLGSGAKFFRASDQRVPATAAYYSRWPVSVFICKILQLFQMPAAMLGHLTDFLLNFYYQNHGFLGILRNIFLIRLKIPKRGEADFISTIGYLDSRMDLHGTPMVSHQADEVISNADNPSLKEGHNSKIKGALGNRSLMDLCIMASKLAYENTKVVERVVAEHWKMHFVADYGGMNYFQDARNTHAFIFCDKPKDANLIVISFRGTGPFSIPNWCTDFDFSLVGLGDAGSVHVGFLEAMGLGHRNSISSFETSINTKSPGSITELRKESEMAPDHLVWAYDGVYFLAASTLKGLLKDHKNAKFVVTGHSLGGALAILFTCILEIQQETEVLDRLLNVYTFGQPRIGNYNLGYFMQNRLNFPERRYFRVVYCNDMVPRVPFDDVFFTFEHFGTCIYYDSRFFGYFTKEEPSRNPFGIENAISAHITAWWELWRSFILNHVYGAEYKETWESRMFRILGLFLPGVAAHSPVNYVNSVRLGRELAIPLMSLKMMAQGY.

The chain crosses the membrane as a helical span at residues 79–99; it reads GHLTDFLLNFYYQNHGFLGIL. Positions 338–342 match the GXSXG motif; the sequence is GHSLG. Residue Ser-340 is the Nucleophile of the active site. Catalysis depends on charge relay system residues Asp-404 and His-497.

The protein belongs to the AB hydrolase superfamily. Lipase family.

It is found in the membrane. The enzyme catalyses a triacylglycerol + H2O = a diacylglycerol + a fatty acid + H(+). Acid lipase that can hydrolyze a range of triacylglycerols but is not active on phospholipids. In vitro, hydrolyzes triolein, trilinolein, triricinolein, tripalmitin, trilaurin and tricaprin. May play a role in the regulation of lipolysis in germinating seeds. The protein is Triacylglycerol lipase OBL1 of Ricinus communis (Castor bean).